The sequence spans 350 residues: tRNA uridine(34) hydroxylase (350 aa).

A Rhodanese domain is found at 146-240 (DDPDALFIDM…YARKAREQGL (95 aa)). The active-site Cysteine persulfide intermediate is the Cys-200.

This sequence belongs to the TrhO family.

The catalysed reaction is uridine(34) in tRNA + AH2 + O2 = 5-hydroxyuridine(34) in tRNA + A + H2O. Its function is as follows. Catalyzes oxygen-dependent 5-hydroxyuridine (ho5U) modification at position 34 in tRNAs, the first step in 5-carboxymethoxyuridine (cmo5U) biosynthesis. May be part of an alternate pathway, which is able to bypass cmo5U biogenesis in a subset of tRNAs under aerobic conditions. This chain is tRNA uridine(34) hydroxylase, found in Escherichia coli (strain SE11).